Here is a 158-residue protein sequence, read N- to C-terminus: Protein hunchback (158 aa).

Residues 18 to 34 (HNHHHHHHHGHHQHQQR) are compositionally biased toward basic residues. 2 disordered regions span residues 18 to 96 (HNHH…TTTA) and 118 to 158 (LTPP…KYMA). The span at 41–50 (ASSPHQSPLP) shows a compositional bias: polar residues. A compositionally biased stretch (low complexity) spans 52–65 (LQLEQYLKQQQQQP). Over residues 139–158 (EPEKEHDLMSNSSEDMKYMA) the composition is skewed to basic and acidic residues.

Belongs to the hunchback C2H2-type zinc-finger protein family.

The protein localises to the nucleus. In terms of biological role, gap class segmentation protein that controls development of head structures. The polypeptide is Protein hunchback (hb) (Drosophila mimica (Fruit fly)).